The chain runs to 314 residues: Formylglycine-generating enzyme (314 aa).

Residues 1 to 20 (MAVAAPSPAAAAEPGPAARP) are compositionally biased toward low complexity. The interval 1-31 (MAVAAPSPAAAAEPGPAARPRSTRGQVRLPG) is disordered. Ca(2+)-binding residues include Asn-194, Ile-195, Asp-208, and His-210. Residues Cys-272 and Cys-277 each contribute to the Cu(2+) site.

Belongs to the sulfatase-modifying factor family. Cu(2+) is required as a cofactor.

It catalyses the reaction L-cysteinyl-[sulfatase] + 2 a thiol + O2 = an organic disulfide + 3-oxo-L-alanyl-[sulfatase] + hydrogen sulfide + H2O + H(+). The protein operates within protein modification; sulfatase oxidation. Its function is as follows. Oxidase that catalyzes the conversion of cysteine to 3-oxoalanine on target proteins. 3-oxoalanine modification, which is also named formylglycine (fGly), occurs in the maturation of arylsulfatases and some alkaline phosphatases that use the hydrated form of 3-oxoalanine as a catalytic nucleophile. The protein is Formylglycine-generating enzyme of Streptomyces coelicolor (strain ATCC BAA-471 / A3(2) / M145).